The following is a 320-amino-acid chain: MATRSPYKRQTKRSMIQSLPASSSASSRRRFISRKRFAMMIPLALLSGAVFLFFMPFNSWGQSSGSSLDLSHRINEIEVVAEFPHDPDAFTQGLLYAGNDTLFESTGLYGKSSVRKVDLRTGKVEILEKMDNTYFGEGLTLLGERLFQVAWLTNTGFTYDLRNLSKVKPFKHHMKDGWGLATDGKALFGSDGTSTLYRMDPQTMKVTDKHIVRYNGREVRYLNELEYINNEVWANVWQSDCIARISPKDGSLLGWILLSKLSRGLLKSGHRGIDVLNGIAWDSDKQRLFVTGKLWPKLYQIKLKQASAKSGNYIEQQCLV.

Over residues Met-1–Lys-12 the composition is skewed to basic residues. The interval Met-1–Ser-22 is disordered. Residues Met-1–Arg-36 lie on the Cytoplasmic side of the membrane. A helical; Signal-anchor for type II membrane protein transmembrane segment spans residues Phe-37–Phe-57. The Lumenal segment spans residues Asn-58–Val-320. N-linked (GlcNAc...) asparagine glycosylation is found at Asn-99 and Asn-163.

Belongs to the plant glutaminyl-peptide cyclotransferase family. In terms of processing, glycosylated.

The protein resides in the endoplasmic reticulum membrane. The enzyme catalyses N-terminal L-glutaminyl-[peptide] = N-terminal 5-oxo-L-prolyl-[peptide] + NH4(+). Functionally, converts glutamine and N-terminal glutamyl residues in peptides to 5-oxoproline and 5-oxoproline residues. Not involved in the major pathway for 5-oxoproline production. This Arabidopsis thaliana (Mouse-ear cress) protein is Glutaminyl-peptide cyclotransferase (QCT).